The chain runs to 295 residues: Ribosomal RNA small subunit methyltransferase A (295 aa).

S-adenosyl-L-methionine-binding residues include asparagine 29, leucine 31, glycine 56, glutamate 77, aspartate 102, and asparagine 128.

Belongs to the class I-like SAM-binding methyltransferase superfamily. rRNA adenine N(6)-methyltransferase family. RsmA subfamily.

It localises to the cytoplasm. The catalysed reaction is adenosine(1518)/adenosine(1519) in 16S rRNA + 4 S-adenosyl-L-methionine = N(6)-dimethyladenosine(1518)/N(6)-dimethyladenosine(1519) in 16S rRNA + 4 S-adenosyl-L-homocysteine + 4 H(+). Specifically dimethylates two adjacent adenosines (A1518 and A1519) in the loop of a conserved hairpin near the 3'-end of 16S rRNA in the 30S particle. May play a critical role in biogenesis of 30S subunits. In Listeria monocytogenes serotype 4a (strain HCC23), this protein is Ribosomal RNA small subunit methyltransferase A.